The primary structure comprises 607 residues: Glutamine--fructose-6-phosphate aminotransferase [isomerizing] (607 aa).

The active-site Nucleophile; for GATase activity is the Cys-2. The 216-residue stretch at 2–217 folds into the Glutamine amidotransferase type-2 domain; the sequence is CGIVGIVGHS…DGDWAVVRRD (216 aa). SIS domains follow at residues 283–422 and 455–597; these read LPFD…ARGV and IARE…VDQP. Lys-602 (for Fru-6P isomerization activity) is an active-site residue.

In terms of assembly, homodimer.

The protein localises to the cytoplasm. The catalysed reaction is D-fructose 6-phosphate + L-glutamine = D-glucosamine 6-phosphate + L-glutamate. In terms of biological role, catalyzes the first step in hexosamine metabolism, converting fructose-6P into glucosamine-6P using glutamine as a nitrogen source. In Mesorhizobium japonicum (strain LMG 29417 / CECT 9101 / MAFF 303099) (Mesorhizobium loti (strain MAFF 303099)), this protein is Glutamine--fructose-6-phosphate aminotransferase [isomerizing].